The sequence spans 121 residues: MADSFLKKMEKLEAAEDFFKLLEIPYDIKVLRVYRLHILQRFHDYISAGSRDVGTQTEEQLKQYYGSLLEKAYRDFVHSTAQEEKVFKVFKEQQPASPRTEVRFVSLDSLIGGSKLKSKTL.

The protein belongs to the NifW family. As to quaternary structure, homotrimer; associates with NifD.

May protect the nitrogenase Fe-Mo protein from oxidative damage. This Methylacidiphilum infernorum (isolate V4) (Methylokorus infernorum (strain V4)) protein is Nitrogenase-stabilizing/protective protein NifW.